We begin with the raw amino-acid sequence, 541 residues long: Centrosomal protein of 63 kDa (541 aa).

Met1 is subject to N-acetylmethionine. 2 coiled-coil regions span residues 22–199 (EAEL…ESVE) and 242–305 (MTVL…TQHA). Ser278 carries the phosphoserine modification. The tract at residues 294 to 324 (QEKVKATDTQHAVEAIRPREESPAEKKYTSQ) is disordered. A compositionally biased stretch (basic and acidic residues) spans 307–321 (EAIRPREESPAEKKY). 2 coiled-coil regions span residues 346–485 (LQAE…KLEL) and 514–541 (HILE…TALK).

The protein belongs to the CEP63 family. Interacts with CEP152 and CDK1; these interactions recruit both ligands to centrosomes. Interacts with CDK2, CDK5RAP2, WDR62, CEP90, KIAA0753/moonraker and CCDC14. CEP63, CDK5RAP2, CEP152, WDR62 are proposed to form a stepwise assembled complex at the centrosome forming a ring near parental centrioles. Interacts with CCDC57; the interaction is required for their location to proximal end of centrioles. Interacts with FXR1; promoting its stabilization. Post-translationally, polyubiquitinated via 'Lys-48'-linked ubiquitin, leading to its degradation. Deubiquitinated by USP36, promoting its stabilization.

Its subcellular location is the cytoplasm. The protein resides in the cytoskeleton. It localises to the microtubule organizing center. It is found in the centrosome. The protein localises to the centriole. Its subcellular location is the centriolar satellite. Required for normal spindle assembly. Plays a key role in mother-centriole-dependent centriole duplication; the function seems also to involve CEP152, CDK5RAP2 and WDR62 through a stepwise assembled complex at the centrosome that recruits CDK2 required for centriole duplication. Reported to be required for centrosomal recruitment of CEP152; however, this function has been questioned. Also recruits CDK1 to centrosomes. Plays a role in DNA damage response. Following DNA damage, such as double-strand breaks (DSBs), is removed from centrosomes; this leads to the inactivation of spindle assembly and delay in mitotic progression. Promotes stabilization of FXR1 protein by inhibiting FXR1 ubiquitination. The protein is Centrosomal protein of 63 kDa (CEP63) of Pongo abelii (Sumatran orangutan).